A 412-amino-acid polypeptide reads, in one-letter code: Tryptophan synthase beta chain (412 aa).

An N6-(pyridoxal phosphate)lysine modification is found at K92.

The protein belongs to the TrpB family. Tetramer of two alpha and two beta chains. Pyridoxal 5'-phosphate is required as a cofactor.

The catalysed reaction is (1S,2R)-1-C-(indol-3-yl)glycerol 3-phosphate + L-serine = D-glyceraldehyde 3-phosphate + L-tryptophan + H2O. It functions in the pathway amino-acid biosynthesis; L-tryptophan biosynthesis; L-tryptophan from chorismate: step 5/5. Its function is as follows. The beta subunit is responsible for the synthesis of L-tryptophan from indole and L-serine. This is Tryptophan synthase beta chain from Methylibium petroleiphilum (strain ATCC BAA-1232 / LMG 22953 / PM1).